The sequence spans 334 residues: tRNA-dihydrouridine(20/20a) synthase (334 aa).

FMN is bound by residues 17–19 and Gln-70; that span reads PMM. Cys-100 functions as the Proton donor in the catalytic mechanism. FMN is bound by residues Lys-139, His-171, 211 to 213, and 233 to 234; these read NGG and GR.

It belongs to the Dus family. DusA subfamily. FMN is required as a cofactor.

It carries out the reaction 5,6-dihydrouridine(20) in tRNA + NADP(+) = uridine(20) in tRNA + NADPH + H(+). The catalysed reaction is 5,6-dihydrouridine(20) in tRNA + NAD(+) = uridine(20) in tRNA + NADH + H(+). The enzyme catalyses 5,6-dihydrouridine(20a) in tRNA + NADP(+) = uridine(20a) in tRNA + NADPH + H(+). It catalyses the reaction 5,6-dihydrouridine(20a) in tRNA + NAD(+) = uridine(20a) in tRNA + NADH + H(+). Its function is as follows. Catalyzes the synthesis of 5,6-dihydrouridine (D), a modified base found in the D-loop of most tRNAs, via the reduction of the C5-C6 double bond in target uridines. Specifically modifies U20 and U20a in tRNAs. The polypeptide is tRNA-dihydrouridine(20/20a) synthase (dus2) (Synechocystis sp. (strain ATCC 27184 / PCC 6803 / Kazusa)).